We begin with the raw amino-acid sequence, 2555 residues long: Plipastatin synthase subunit C (2555 aa).

The interval 7-306 (IQDIYPLSFM…NTIPIRAQSD (300 aa)) is condensation 1. Positions 491-894 (TYAELDMYAS…SIEGVREAAV (404 aa)) are adenylation 1. Residues 967-1042 (APRNVTEMKL…GLATVIREGT (76 aa)) enclose the Carrier 1 domain. Serine 1002 carries the O-(pantetheine 4'-phosphoryl)serine modification. A condensation 2 region spans residues 1054 to 1344 (KQETYPVSSA…NTLALRTRPE (291 aa)). An adenylation 2 region spans residues 1532 to 1927 (TYEDLNSWAN…QIDGVKEAAV (396 aa)). A Carrier 2 domain is found at 2003 to 2077 (PPRNELEEQL…DLSPFIRKSE (75 aa)). At serine 2038 the chain carries O-(pantetheine 4'-phosphoryl)serine. The epimerization 3 stretch occupies residues 2085–2548 (IQGDVPWTPV…SLTAEDLDSI (464 aa)).

The protein belongs to the ATP-dependent AMP-binding enzyme family. The cofactor is pantetheine 4'-phosphate.

Its function is as follows. This protein is a multifunctional enzyme, able to activate and polymerize the amino acids Glu and Ala/Val as part of the biosynthesis of the lipopeptide antibiotic plipastatin. The Ala/Val residue is further epimerized to the D-isomer form. The activation sites for these amino acids consist of individual domains. The polypeptide is Plipastatin synthase subunit C (ppsC) (Bacillus subtilis (strain 168)).